A 102-amino-acid chain; its full sequence is Large ribosomal subunit protein uL24 (102 aa).

This sequence belongs to the universal ribosomal protein uL24 family. Part of the 50S ribosomal subunit.

In terms of biological role, one of two assembly initiator proteins, it binds directly to the 5'-end of the 23S rRNA, where it nucleates assembly of the 50S subunit. One of the proteins that surrounds the polypeptide exit tunnel on the outside of the subunit. The chain is Large ribosomal subunit protein uL24 from Limosilactobacillus reuteri (strain DSM 20016) (Lactobacillus reuteri).